A 236-amino-acid polypeptide reads, in one-letter code: Purine nucleoside phosphorylase DeoD-type (236 aa).

His-4 is a binding site for a purine D-ribonucleoside. Residues Gly-20, Arg-24, Arg-43, and 87–90 each bind phosphate; that span reads RVGT. A purine D-ribonucleoside is bound by residues 179 to 181 and 203 to 204; these read EME and SD. Catalysis depends on Asp-204, which acts as the Proton donor.

The protein belongs to the PNP/UDP phosphorylase family. Homohexamer; trimer of homodimers.

The catalysed reaction is a purine D-ribonucleoside + phosphate = a purine nucleobase + alpha-D-ribose 1-phosphate. It catalyses the reaction a purine 2'-deoxy-D-ribonucleoside + phosphate = a purine nucleobase + 2-deoxy-alpha-D-ribose 1-phosphate. Its function is as follows. Catalyzes the reversible phosphorolytic breakdown of the N-glycosidic bond in the beta-(deoxy)ribonucleoside molecules, with the formation of the corresponding free purine bases and pentose-1-phosphate. In Streptococcus thermophilus (strain ATCC BAA-491 / LMD-9), this protein is Purine nucleoside phosphorylase DeoD-type.